The chain runs to 369 residues: 3-isopropylmalate dehydrogenase (369 aa).

Position 76–89 (76–89) interacts with NAD(+); it reads GPKWDRNPSHLRPE. Residues arginine 96, arginine 106, arginine 134, and aspartate 223 each contribute to the substrate site. Aspartate 223, aspartate 247, and aspartate 251 together coordinate Mg(2+). Residue 281–293 coordinates NAD(+); the sequence is GSAPDIAGQNKAN.

This sequence belongs to the isocitrate and isopropylmalate dehydrogenases family. LeuB type 1 subfamily. In terms of assembly, homodimer. Mg(2+) is required as a cofactor. It depends on Mn(2+) as a cofactor.

Its subcellular location is the cytoplasm. The catalysed reaction is (2R,3S)-3-isopropylmalate + NAD(+) = 4-methyl-2-oxopentanoate + CO2 + NADH. Its pathway is amino-acid biosynthesis; L-leucine biosynthesis; L-leucine from 3-methyl-2-oxobutanoate: step 3/4. Functionally, catalyzes the oxidation of 3-carboxy-2-hydroxy-4-methylpentanoate (3-isopropylmalate) to 3-carboxy-4-methyl-2-oxopentanoate. The product decarboxylates to 4-methyl-2 oxopentanoate. The chain is 3-isopropylmalate dehydrogenase (leuB) from Priestia megaterium (strain DSM 319 / IMG 1521) (Bacillus megaterium).